The following is a 499-amino-acid chain: Centrosomal protein of 57 kDa (499 aa).

Residues 1-35 (MAAASVSETSASQFSNILAEPSKSNGSMVRHSSSP) are compositionally biased toward polar residues. The segment at 1-58 (MAAASVSETSASQFSNILAEPSKSNGSMVRHSSSPYVVYPPDKPFLNSDLRRSPNKPT) is disordered. At serine 53 the chain carries Phosphoserine. The centrosome localization domain (CLD) stretch occupies residues 58–239 (TFAYPESNSR…KAAQLQTGLE (182 aa)). Residues 63-241 (ESNSRAIFSA…AQLQTGLEVN (179 aa)) are a coiled coil. The interval 277 to 490 (AVQPHYRLCL…KDMQSIQNSL (214 aa)) is mediates interaction with microtubules. Disordered regions lie at residues 334–357 (KQVS…SVNE) and 431–476 (KQKK…SRKN). The span at 346-357 (SATPPSSSSVNE) shows a compositional bias: low complexity. Residues 389 to 450 (TVELKDNLEC…KTLDEEGNSS (62 aa)) are a coiled coil. A compositionally biased stretch (basic and acidic residues) spans 431 to 444 (KQKKELKATRKTLD). The segment covering 449–459 (SSSRSTTTGTT) has biased composition (low complexity). A compositionally biased stretch (basic and acidic residues) spans 460–474 (NKKDFAKPRPGEKSR).

It belongs to the translokin family. Homodimer and homooligomer. Interacts with FGF2 and RAP80. Does not interact with FGF1 or FGF2 isoform 24 kDa. Interacts with microtubules.

It is found in the nucleus. Its subcellular location is the cytoplasm. The protein resides in the cytoskeleton. The protein localises to the microtubule organizing center. It localises to the centrosome. Centrosomal protein which may be required for microtubule attachment to centrosomes. May act by forming ring-like structures around microtubules. Mediates nuclear translocation and mitogenic activity of the internalized growth factor FGF2. This chain is Centrosomal protein of 57 kDa (CEP57), found in Bos taurus (Bovine).